A 621-amino-acid polypeptide reads, in one-letter code: C4-dicarboxylate transport sensor protein DctB (621 aa).

At 1-26 (MHHVRMVKLPAEASDPHALRSRARRS) the chain is on the cytoplasmic side. A helical transmembrane segment spans residues 27-45 (WLVFAAVALVLLAAGLLLA). Residues 46-320 (RDYGRSQALA…PLAAGAREAQ (275 aa)) are Periplasmic-facing. The chain crosses the membrane as a helical span at residues 321–338 (LLTLAALVPLLALAALLL). The Cytoplasmic portion of the chain corresponds to 339–621 (RRRQVVAMRS…TTFAVNLKKA (283 aa)). Residues 412-621 (GVAHEINQPV…TTFAVNLKKA (210 aa)) form the Histidine kinase domain. His-415 is modified (phosphohistidine; by autocatalysis).

In terms of processing, autophosphorylated.

It localises to the cell inner membrane. It carries out the reaction ATP + protein L-histidine = ADP + protein N-phospho-L-histidine.. Member of the two-component regulatory system DctB/DctD involved in the transport of C4-dicarboxylates. DctB functions as a membrane-associated protein kinase that phosphorylates DctD in response to environmental signals. The sequence is that of C4-dicarboxylate transport sensor protein DctB (dctB) from Rhizobium meliloti (strain 1021) (Ensifer meliloti).